The sequence spans 348 residues: Heat-inducible transcription repressor HrcA (348 aa).

Belongs to the HrcA family.

In terms of biological role, negative regulator of class I heat shock genes (grpE-dnaK-dnaJ and groELS operons). Prevents heat-shock induction of these operons. In Pelotomaculum thermopropionicum (strain DSM 13744 / JCM 10971 / SI), this protein is Heat-inducible transcription repressor HrcA.